The following is a 499-amino-acid chain: Alpha-amylase B (499 aa).

The signal sequence occupies residues 1–21 (MMVAWWSLFLYGLQVAAPALA). Residues cysteine 51 and cysteine 59 are joined by a disulfide bond. Residues glutamine 56 and tryptophan 104 each contribute to the substrate site. Ca(2+) is bound at residue asparagine 142. Histidine 143 serves as a coordination point for substrate. A disulfide bond links cysteine 171 and cysteine 185. Ca(2+)-binding residues include glutamate 183 and aspartate 196. A glycan (N-linked (GlcNAc...) asparagine) is linked at asparagine 218. Arginine 225 is a binding site for substrate. The Ca(2+) site is built by aspartate 227, histidine 231, and glutamate 251. The active-site Nucleophile is the aspartate 227. Substrate is bound at residue 230 to 231 (KH). Glutamate 251 functions as the Proton donor in the catalytic mechanism. A substrate-binding site is contributed by glycine 255. Cysteines 261 and 304 form a disulfide. Aspartate 318 and arginine 365 together coordinate substrate. The cysteines at positions 461 and 496 are disulfide-linked.

Belongs to the glycosyl hydrolase 13 family. Ca(2+) is required as a cofactor.

It catalyses the reaction Endohydrolysis of (1-&gt;4)-alpha-D-glucosidic linkages in polysaccharides containing three or more (1-&gt;4)-alpha-linked D-glucose units.. This is Alpha-amylase B (amyB) from Aspergillus awamori (Black koji mold).